A 177-amino-acid polypeptide reads, in one-letter code: PLAC8-like protein 1 (177 aa).

Belongs to the cornifelin family.

This Mus musculus (Mouse) protein is PLAC8-like protein 1 (Plac8l1).